A 374-amino-acid chain; its full sequence is MSRVPSPPPPAEMSSGPVAESWCYTQIKVVKFSYMWTINNFSFCREEMGEVIKSSTFSSGANDKLKWCLRVNPKGLDEESKDYLSLYLLLVSCPKSEVRAKFKFSILNAKGEETKAMESQRAYRFVQGKDWGFKKFIRRDFLLDEANGLLPDDKLTLFCEVSVVQDSVNISGQNTMNMVKVPECRLADELGGLWENSRFTDCCLCVAGQEFQAHKAILAARSPVFSAMFEHEMEESKKNRVEINDVEPEVFKEMMCFIYTGKAPNLDKMADDLLAAADKYALERLKVMCEDALCSNLSVENAAEILILADLHSADQLKTQAVDFINYHASDVLETSGWKSMVVSHPHLVAEAYRSLASAQCPFLGPPRKRLKQS.

The MATH domain occupies 31-161 (KFSYMWTINN…DDKLTLFCEV (131 aa)). Residues 71-191 (VNPKGLDEES…PECRLADELG (121 aa)) form a required for nuclear localization region. An important for binding substrate proteins region spans residues 123-133 (YRFVQGKDWGF). One can recognise a BTB domain in the interval 173-297 (QNTMNMVKVP…MCEDALCSNL (125 aa)). Important for homodimerization regions lie at residues 186–217 (LADE…HKAI) and 297–355 (LSVE…AYRS).

The protein belongs to the Tdpoz family. As to quaternary structure, interacts with GLI2 and GLI3. Homodimer and homooligomer. Heterodimer with SPOPL. Each dimer interacts with two CUL3 molecules. Part of cullin-RING-based BCR (BTB-CUL3-RBX1) E3 ubiquitin-protein ligase complexes that contain CUL3 and homodimeric SPOP, or the heterodimer formed by SPOP and SPOPL, plus a target protein, such as MACROH2A1, PDX1/IPF1, BMI1, BRMS1 and DAXX. Interacts with IRF1; this interaction mediates IRF1 proteasomal degradation. Interacts with HNF1A.

It localises to the nucleus. The protein localises to the nucleus speckle. It functions in the pathway protein modification; protein ubiquitination. Its function is as follows. Component of a cullin-RING-based BCR (BTB-CUL3-RBX1) E3 ubiquitin-protein ligase complex that mediates the ubiquitination of target proteins, leading most often to their proteasomal degradation. In complex with CUL3, involved in ubiquitination and proteasomal degradation of BRMS1, DAXX, PDX1/IPF1, GLI2 and GLI3. In complex with CUL3, involved in ubiquitination of MACROH2A1 and BMI1; this does not lead to their proteasomal degradation. Inhibits transcriptional activation of PDX1/IPF1 targets, such as insulin, by promoting PDX1/IPF1 degradation. The cullin-RING-based BCR (BTB-CUL3-RBX1) E3 ubiquitin-protein ligase complex containing homodimeric SPOP has higher ubiquitin ligase activity than the complex that contains the heterodimer formed by SPOP and SPOPL. Involved in the regulation of bromodomain and extra-terminal motif (BET) proteins BRD2, BRD3, BRD4 stability.Plays an essential role for proper translation, but not for their degradation, of critical DNA replication licensing factors CDT1 and CDC6, thereby participating in DNA synthesis and cell proliferation. Regulates interferon regulatory factor 1/IRF1 proteasomal turnover by targeting S/T-rich degrons in IRF1. Involved in ubiquitination of BRDT and promotes its degradation, thereby regulates histone removal in early condensing spermatids prior to histone-to-protamine exchange. The chain is Speckle-type POZ protein (SPOP) from Bos taurus (Bovine).